Consider the following 327-residue polypeptide: Cobalamin biosynthesis protein CobD (327 aa).

4 helical membrane-spanning segments follow: residues 61 to 78 (MWLT…GLVI), 80 to 102 (SILP…ILLA), 160 to 182 (GIVA…YKFI), and 300 to 322 (AALV…ASLV).

It belongs to the CobD/CbiB family.

It is found in the cell membrane. It functions in the pathway cofactor biosynthesis; adenosylcobalamin biosynthesis. Functionally, converts cobyric acid to cobinamide by the addition of aminopropanol on the F carboxylic group. The sequence is that of Cobalamin biosynthesis protein CobD from Brucella melitensis biotype 1 (strain ATCC 23456 / CCUG 17765 / NCTC 10094 / 16M).